Reading from the N-terminus, the 118-residue chain is Non-specific lipid-transfer protein 1 (118 aa).

A signal peptide spans 1–25 (MASLRVSCLVALMCMVVISAPMAEA). 4 disulfide bridges follow: cysteine 29/cysteine 76, cysteine 39/cysteine 53, cysteine 54/cysteine 99, and cysteine 74/cysteine 113.

It belongs to the plant LTP family.

Plant non-specific lipid-transfer proteins transfer phospholipids as well as galactolipids across membranes. May play a role in wax or cutin deposition in the cell walls of expanding epidermal cells and certain secretory tissues. The chain is Non-specific lipid-transfer protein 1 from Lens culinaris (Lentil).